A 167-amino-acid polypeptide reads, in one-letter code: Small ribosomal subunit protein uS5 (167 aa).

The region spanning 11–74 is the S5 DRBM domain; that stretch reads LQEKLIAVNR…EKARRNMINV (64 aa).

Belongs to the universal ribosomal protein uS5 family. In terms of assembly, part of the 30S ribosomal subunit. Contacts proteins S4 and S8.

Its function is as follows. With S4 and S12 plays an important role in translational accuracy. In terms of biological role, located at the back of the 30S subunit body where it stabilizes the conformation of the head with respect to the body. This Klebsiella pneumoniae subsp. pneumoniae (strain ATCC 700721 / MGH 78578) protein is Small ribosomal subunit protein uS5.